A 437-amino-acid polypeptide reads, in one-letter code: tRNA-queuosine alpha-mannosyltransferase (437 aa).

The protein belongs to the glycosyltransferase group 1 family. Glycosyltransferase 4 subfamily.

It is found in the cytoplasm. Its subcellular location is the nucleus. The enzyme catalyses queuosine(34) in tRNA(Asp) + GDP-alpha-D-mannose = O-4''-alpha-D-mannosylqueuosine(34) in tRNA(Asp) + GDP + H(+). Its function is as follows. Glycosyltransferase that specifically catalyzes mannosylation of cytoplasmic tRNA(Asp) modified with queuosine at position 34 (queuosine(34)). Mannosylates the cyclopentene moiety of queuosine(34) in tRNA(Asp) to form mannosyl-queuosine(34). Mannosylation of queuosine(34) in tRNA(Asp) is required to slow-down elongation at cognate codons, GAC and GAU, thereby regulating protein translation. The chain is tRNA-queuosine alpha-mannosyltransferase (gtdc1) from Xenopus laevis (African clawed frog).